Here is a 220-residue protein sequence, read N- to C-terminus: Thiamine-phosphate synthase (220 aa).

Residues 38–42 and asparagine 70 contribute to the 4-amino-2-methyl-5-(diphosphooxymethyl)pyrimidine site; that span reads QYRDK. Mg(2+)-binding residues include aspartate 71 and aspartate 90. A 4-amino-2-methyl-5-(diphosphooxymethyl)pyrimidine-binding site is contributed by threonine 109. 135 to 137 provides a ligand contact to 2-[(2R,5Z)-2-carboxy-4-methylthiazol-5(2H)-ylidene]ethyl phosphate; the sequence is TVS. Position 138 (lysine 138) interacts with 4-amino-2-methyl-5-(diphosphooxymethyl)pyrimidine. 2-[(2R,5Z)-2-carboxy-4-methylthiazol-5(2H)-ylidene]ethyl phosphate is bound by residues glycine 171 and 191-192; that span reads IS.

The protein belongs to the thiamine-phosphate synthase family. The cofactor is Mg(2+).

The catalysed reaction is 2-[(2R,5Z)-2-carboxy-4-methylthiazol-5(2H)-ylidene]ethyl phosphate + 4-amino-2-methyl-5-(diphosphooxymethyl)pyrimidine + 2 H(+) = thiamine phosphate + CO2 + diphosphate. It catalyses the reaction 2-(2-carboxy-4-methylthiazol-5-yl)ethyl phosphate + 4-amino-2-methyl-5-(diphosphooxymethyl)pyrimidine + 2 H(+) = thiamine phosphate + CO2 + diphosphate. It carries out the reaction 4-methyl-5-(2-phosphooxyethyl)-thiazole + 4-amino-2-methyl-5-(diphosphooxymethyl)pyrimidine + H(+) = thiamine phosphate + diphosphate. Its pathway is cofactor biosynthesis; thiamine diphosphate biosynthesis; thiamine phosphate from 4-amino-2-methyl-5-diphosphomethylpyrimidine and 4-methyl-5-(2-phosphoethyl)-thiazole: step 1/1. Its function is as follows. Condenses 4-methyl-5-(beta-hydroxyethyl)thiazole monophosphate (THZ-P) and 2-methyl-4-amino-5-hydroxymethyl pyrimidine pyrophosphate (HMP-PP) to form thiamine monophosphate (TMP). This Agrobacterium fabrum (strain C58 / ATCC 33970) (Agrobacterium tumefaciens (strain C58)) protein is Thiamine-phosphate synthase.